A 107-amino-acid chain; its full sequence is Glutaredoxin 4 (107 aa).

The 103-residue stretch at 4–106 (IDKIKQQINE…TLLKETATKH (103 aa)) folds into the Glutaredoxin domain. Lys-21 is a glutathione binding site. Position 29 (Cys-29) interacts with [2Fe-2S] cluster. Glutathione is bound by residues Arg-58, Phe-70, and 83–84 (CD).

Belongs to the glutaredoxin family. Monothiol subfamily. Homodimer.

The protein localises to the cytoplasm. Its function is as follows. Monothiol glutaredoxin involved in the biogenesis of iron-sulfur clusters. This Haemophilus ducreyi (strain 35000HP / ATCC 700724) protein is Glutaredoxin 4 (grxD).